Consider the following 114-residue polypeptide: MSKVLVEAKGMGLRSTPYKLNLVADLIRGKPVSVAVMYLKFCKKKSARYISKVLKSAIANAQANYSVDVDNLYIKEVLVGKSFSLRRIHARARGKACRVYKHYGNVIIKLFERV.

The protein belongs to the universal ribosomal protein uL22 family. In terms of assembly, part of the 50S ribosomal subunit.

This protein binds specifically to 23S rRNA; its binding is stimulated by other ribosomal proteins, e.g. L4, L17, and L20. It is important during the early stages of 50S assembly. It makes multiple contacts with different domains of the 23S rRNA in the assembled 50S subunit and ribosome. In terms of biological role, the globular domain of the protein is located near the polypeptide exit tunnel on the outside of the subunit, while an extended beta-hairpin is found that lines the wall of the exit tunnel in the center of the 70S ribosome. This Ehrlichia ruminantium (strain Gardel) protein is Large ribosomal subunit protein uL22.